Consider the following 33-residue polypeptide: Defensin-1 (33 aa).

3 cysteine pairs are disulfide-bonded: Cys4/Cys32, Cys6/Cys21, and Cys11/Cys31.

The protein belongs to the alpha-defensin family.

The protein localises to the secreted. Its function is as follows. Has antibacterial activity against the Gram-negative bacterium E.coli and the Gram-positive bacteria L.monocytogenes and S.aureus. Has antifungal activity against C.albicans. This is Defensin-1 from Papio hamadryas (Hamadryas baboon).